We begin with the raw amino-acid sequence, 310 residues long: Probable plastid-lipid-associated protein 2, chloroplastic (310 aa).

The transit peptide at 1 to 59 (MATVQLSTQFSCQTRVSISPNSKSISKPPFLVPVTSIIHRPMISTGGIAVSPRRVFKVR) directs the protein to the chloroplast. Thr61 carries the phosphothreonine modification. A coiled-coil region spans residues 65–94 (EIGSALLAAEEAIEDVEETERLKRSLVDSL).

It belongs to the PAP/fibrillin family.

It is found in the plastid. It localises to the chloroplast. The protein resides in the plastoglobule. Functionally, probably involved in light/cold stress-related jasmonate (JA) biosynthesis. This chain is Probable plastid-lipid-associated protein 2, chloroplastic (PAP2), found in Arabidopsis thaliana (Mouse-ear cress).